The primary structure comprises 97 residues: Small ribosomal subunit protein bS20 (97 aa).

The protein belongs to the bacterial ribosomal protein bS20 family.

Its function is as follows. Binds directly to 16S ribosomal RNA. The sequence is that of Small ribosomal subunit protein bS20 from Synechocystis sp. (strain ATCC 27184 / PCC 6803 / Kazusa).